The sequence spans 272 residues: Insulin-like growth factor-binding protein 1 (272 aa).

Positions 1–25 are cleaved as a signal peptide; it reads MPEFLTVVSWPFLILLSFQVRVVAG. Positions 28–109 constitute an IGFBP N-terminal domain; the sequence is QPWHCAPCTA…TRGQGACVLE (82 aa). Intrachain disulfides connect Cys32-Cys59, Cys35-Cys61, Cys43-Cys62, Cys50-Cys65, Cys73-Cys86, and Cys80-Cys106. A disordered region spans residues 115-143; the sequence is TSSLSGSQHEEAKAAVASEDELAESPEMT. The segment covering 132–143 has biased composition (acidic residues); sequence SEDELAESPEMT. A phosphoserine mark is found at Ser139, Ser157, and Ser169. Residue Thr170 is modified to Phosphothreonine. Position 171 is a phosphotyrosine (Tyr171). A Thyroglobulin type-1 domain is found at 186–264; sequence KEPCQRELYK…SLETRGDPNC (79 aa). 3 cysteine pairs are disulfide-bonded: Cys189/Cys219, Cys230/Cys241, and Cys243/Cys264. Ser255 is modified (phosphoserine). Positions 259–261 match the Cell attachment site motif; it reads RGD.

In terms of assembly, binds equally well IGF1 and IGF2. Interacts with integrin ITGA5:ITGB1. Interacts with VHL; this interaction inhibits HIF1A degradation.

Its subcellular location is the secreted. Its function is as follows. Multifunctional protein that plays a critical role in regulating the availability of IGFs such as IGF1 and IGF2 to their receptors and thereby regulates IGF-mediated cellular processes including cell migration, proliferation, differentiation or apoptosis in a cell-type specific manner. Also plays a positive role in cell migration by interacting with integrin ITGA5:ITGB1 through its RGD motif. Mechanistically, binding to integrins leads to activation of focal adhesion kinase/PTK2 and stimulation of the mitogen-activated protein kinase (MAPK) pathway. Regulates cardiomyocyte apoptosis by suppressing HIF-1alpha/HIF1A ubiquitination and subsequent degradation. The sequence is that of Insulin-like growth factor-binding protein 1 (Igfbp1) from Rattus norvegicus (Rat).